Consider the following 171-residue polypeptide: Large ribosomal subunit protein uL10 (171 aa).

The protein belongs to the universal ribosomal protein uL10 family. As to quaternary structure, part of the ribosomal stalk of the 50S ribosomal subunit. The N-terminus interacts with L11 and the large rRNA to form the base of the stalk. The C-terminus forms an elongated spine to which L12 dimers bind in a sequential fashion forming a multimeric L10(L12)X complex.

Functionally, forms part of the ribosomal stalk, playing a central role in the interaction of the ribosome with GTP-bound translation factors. The polypeptide is Large ribosomal subunit protein uL10 (Lactococcus lactis subsp. cremoris (strain SK11)).